The following is a 319-amino-acid chain: Annexin A4 (319 aa).

N-acetylalanine is present on alanine 2. Position 7 is a phosphothreonine (threonine 7). Serine 12 is subject to Phosphoserine. Annexin repeat units lie at residues 14 to 85, 86 to 157, 169 to 241, and 245 to 316; these read FNAM…GMMT, PTVL…SLSA, ALVR…AIVK, and NKSA…VLCG. N6-acetyllysine occurs at positions 213, 293, and 300.

This sequence belongs to the annexin family.

It localises to the zymogen granule membrane. Calcium/phospholipid-binding protein which promotes membrane fusion and is involved in exocytosis. The protein is Annexin A4 of Homo sapiens (Human).